The following is a 164-amino-acid chain: Phosphopantetheine adenylyltransferase (164 aa).

Thr9 is a binding site for substrate. Residues 9–10 (TF) and His17 each bind ATP. Substrate-binding residues include Lys41, Leu78, and Arg92. ATP is bound by residues 93 to 95 (GLR), Glu103, and 128 to 134 (RQAIASK).

The protein belongs to the bacterial CoaD family. In terms of assembly, homohexamer. It depends on Mg(2+) as a cofactor.

The protein localises to the cytoplasm. It carries out the reaction (R)-4'-phosphopantetheine + ATP + H(+) = 3'-dephospho-CoA + diphosphate. It functions in the pathway cofactor biosynthesis; coenzyme A biosynthesis; CoA from (R)-pantothenate: step 4/5. Functionally, reversibly transfers an adenylyl group from ATP to 4'-phosphopantetheine, yielding dephospho-CoA (dPCoA) and pyrophosphate. The protein is Phosphopantetheine adenylyltransferase of Paracoccus denitrificans (strain Pd 1222).